Consider the following 120-residue polypeptide: Adult-specific rigid cuticular protein 11.9 (120 aa).

The Chitin-binding type R&amp;R domain occupies 9 to 87; it reads GGAYNFGYNT…ALAAMAPKAP (79 aa).

In terms of biological role, component of the rigid cuticle of the spider. The chain is Adult-specific rigid cuticular protein 11.9 from Araneus diadematus (European garden spider).